Here is a 179-residue protein sequence, read N- to C-terminus: uncharacterized protein (179 aa).

This is an uncharacterized protein from Salmonella typhimurium (strain LT2 / SGSC1412 / ATCC 700720).